The sequence spans 498 residues: MTPVVALVGRPNVGKSTLFNRLTRSRDALVADFPGLTRDRKYGQAVVDDMNFIVVDTGGIDGSEEGIEVKMAEQSLQAIDESDVVLFMVDARAGVTSADIGIANHLRRQKKKVFLVANKTDGLDGDVHCADFYSLALGEVYQIAASHGRGVTSLLEKALAPFFEELTGKSAEEEAADEDAAYWAAFEGTDVTEEDESDEELTGEDRYADLPIKFAIIGRPNVGKSTLTNRMLGEDRVIVYDLPGTTRDSIYIPLERDDQHYIVIDTAGVRKKKKIYETVEKFSVVKTLQAIEDANVVLLLIDAREGVSDQDLSLLGFTLHSGRSIVIAVNKWDGLDQDTKEKIKEDLERRLGFVDFARVHFISALHGSGVGNLFDSIQEAYRSATKRISTSMLTRIMNMAAEDHQPPLVRGRRVKLKYAHAGGYNPPRIIIHGNQVKDLPESYKRYLINYYRKSLKIMGTPIHIEFQEGDNPFEGRRNKLTQTQIRKRRRMMSFVKKG.

2 consecutive EngA-type G domains span residues 3-166 (PVVA…FEEL) and 212-385 (IKFA…RSAT). GTP-binding positions include 9 to 16 (GRPNVGKS), 56 to 60 (DTGGI), 118 to 121 (NKTD), 218 to 225 (GRPNVGKS), 265 to 269 (DTAGV), and 330 to 333 (NKWD). The 85-residue stretch at 386 to 470 (KRISTSMLTR…PIHIEFQEGD (85 aa)) folds into the KH-like domain.

This sequence belongs to the TRAFAC class TrmE-Era-EngA-EngB-Septin-like GTPase superfamily. EngA (Der) GTPase family. In terms of assembly, associates with the 50S ribosomal subunit.

Its function is as follows. GTPase that plays an essential role in the late steps of ribosome biogenesis. The polypeptide is GTPase Der (Tolumonas auensis (strain DSM 9187 / NBRC 110442 / TA 4)).